Consider the following 348-residue polypeptide: Haptoglobin-related protein (348 aa).

Positions 1–18 (MSDLGAVISLLLWGRQLF) form a signal peptide, not cleaved. The Sushi domain maps to 34–87 (FPKPPEIANGYVEHLFRYQCKNYYRLRTEGDGVYTLNDKKQWINKAVGDKLPEC). A Peptidase S1 domain is found at 104 to 346 (ILGGHLDAKG…IQHWVQKTIA (243 aa)). Intrachain disulfides connect cysteine 251–cysteine 282 and cysteine 293–cysteine 323.

It belongs to the peptidase S1 family. In adult liver the amount of HPR mRNA is at the lower limit of detection, therefore the extent of its expression is at most less than 1000-fold that of the HP1F gene. No HPR mRNA can be detected in fetal liver. Expressed in Hep-G2 and leukemia MOLT-4 cell lines.

The protein resides in the secreted. Primate-specific plasma protein associated with apolipoprotein L-I (apoL-I)-containing high-density lipoprotein (HDL). This HDL particle, termed trypanosome lytic factor-1 (TLF-1), mediates human innate immune protection against many species of African trypanosomes. Binds hemoglobin with high affinity and may contribute to the clearance of cell-free hemoglobin to allow hepatic recycling of heme iron. This is Haptoglobin-related protein (HPR) from Homo sapiens (Human).